Here is a 426-residue protein sequence, read N- to C-terminus: Serine--tRNA ligase (426 aa).

233 to 235 is an L-serine binding site; sequence TAE. 264–266 is a binding site for ATP; the sequence is RSE. Glu287 contacts L-serine. ATP is bound at residue 351–354; sequence EISS. Ser387 contacts L-serine.

Belongs to the class-II aminoacyl-tRNA synthetase family. Type-1 seryl-tRNA synthetase subfamily. In terms of assembly, homodimer. The tRNA molecule binds across the dimer.

The protein resides in the cytoplasm. The enzyme catalyses tRNA(Ser) + L-serine + ATP = L-seryl-tRNA(Ser) + AMP + diphosphate + H(+). It carries out the reaction tRNA(Sec) + L-serine + ATP = L-seryl-tRNA(Sec) + AMP + diphosphate + H(+). The protein operates within aminoacyl-tRNA biosynthesis; selenocysteinyl-tRNA(Sec) biosynthesis; L-seryl-tRNA(Sec) from L-serine and tRNA(Sec): step 1/1. Catalyzes the attachment of serine to tRNA(Ser). Is also able to aminoacylate tRNA(Sec) with serine, to form the misacylated tRNA L-seryl-tRNA(Sec), which will be further converted into selenocysteinyl-tRNA(Sec). This chain is Serine--tRNA ligase, found in Clostridium botulinum (strain Kyoto / Type A2).